The sequence spans 135 residues: MQPSSPSTSHCSQVSIKVQHKIAKKKPIRRKRVDLDCGCSYYLHLNCNNHGFTHRGTHHCSSGREWRFYLGDKQSPLFQDNRTQPEAISNEPRHHFHSDKIQPQHQEGNGDSQMFSRLPNLDDITASDWSFLKSI.

Positions 17–32 (KVQHKIAKKKPIRRKR) match the Nuclear localization signal motif. A zinc finger spans residues 37-54 (CGCSYYLHLNCNNHGFTH). Composition is skewed to polar residues over residues 77-87 (LFQDNRTQPEA) and 101-115 (IQPQ…SQMF). The interval 77–117 (LFQDNRTQPEAISNEPRHHFHSDKIQPQHQEGNGDSQMFSR) is disordered. The transactivation stretch occupies residues 120-135 (NLDDITASDWSFLKSI).

It belongs to the geminiviridae transcriptional activator protein family. As to quaternary structure, monomer. Homodimer. Homooligomer. Self-interaction correlates with nuclear localization and efficient activation of transcription. Monomers suppress local silencing by interacting with and inactivating host adenosine kinase 2 (ADK2) in the cytoplasm. Interacts with and inhibits host SNF1 kinase. Binds to ssDNA. May interact with host RPS27A. In terms of processing, phosphorylated.

Its subcellular location is the host nucleus. It is found in the host cytoplasm. Multifunctional protein that modulates host antiviral defenses and promotes host attractiveness to insect vectors. Acts as a suppressor of RNA-mediated gene silencing, also known as post-transcriptional gene silencing (PTGS), a mechanism of plant viral defense that limits the accumulation of viral RNAs. TrAP suppresses the host RNA silencing by inhibiting adenosine kinase 2 (ADK2), a kinase involved in a general methylation pathway. Also suppresses the host basal defense by interacting with and inhibiting SNF1 kinase, a key regulator of cell metabolism implicated in innate antiviral defense. In terms of biological role, inhibits signal transduction by the phytohormone jasmonate, making the infected plant more attractive to aphids, which are the second host to play a role as a dissemination vector. Acts by binding to ubiquitin precursor RPS27A, thereby preventing ubiquitin degradation of JAZ. The chain is Transcriptional activator protein from Tomato yellow leaf curl virus (strain Israel) (TYLCV).